Reading from the N-terminus, the 246-residue chain is tRNA pseudouridine synthase A (246 aa).

Aspartate 52 serves as the catalytic Nucleophile. Tyrosine 110 is a substrate binding site.

The protein belongs to the tRNA pseudouridine synthase TruA family. As to quaternary structure, homodimer.

It carries out the reaction uridine(38/39/40) in tRNA = pseudouridine(38/39/40) in tRNA. In terms of biological role, formation of pseudouridine at positions 38, 39 and 40 in the anticodon stem and loop of transfer RNAs. The chain is tRNA pseudouridine synthase A from Exiguobacterium sp. (strain ATCC BAA-1283 / AT1b).